Reading from the N-terminus, the 733-residue chain is Serine/threonine-protein kinase ATG1c (733 aa).

The region spanning 12-269 (YLVGRQIGSG…FEEFFNHPFL (258 aa)) is the Protein kinase domain. ATP-binding positions include 18 to 26 (IGSGSFSVV) and lysine 41. Aspartate 134 serves as the catalytic Proton acceptor. Disordered stretches follow at residues 292 to 363 (SSGS…ELTS) and 379 to 414 (FETQ…SQDS). Residues 329–339 (KKTSSMKSSSG) show a composition bias toward polar residues. 2 stretches are compositionally biased toward basic and acidic residues: residues 342-360 (VDTR…KHTE) and 379-393 (FETQ…RREP). The short motif at 419-422 (FVLV) is the AIM (Atg8-family-interacting motif) element. 2 disordered regions span residues 565 to 596 (GSPS…SHDG) and 713 to 733 (HRRS…NRQS). Positions 566–577 (SPSQDINKLRSS) are enriched in polar residues. Basic and acidic residues predominate over residues 579–596 (LKHDTHSSNKVTDLSHDG). Over residues 717 to 733 (SAGQMQGSSLAMMNRQS) the composition is skewed to polar residues.

The protein belongs to the protein kinase superfamily. Ser/Thr protein kinase family.

The protein localises to the cytoplasmic vesicle. Its subcellular location is the autophagosome. Serine/threonine protein kinase involved in autophagy. The ATG1-ATG13 protein kinase complex regulates downstream events required for autophagosome enclosure and/or vacuolar delivery. This is Serine/threonine-protein kinase ATG1c from Arabidopsis thaliana (Mouse-ear cress).